The following is a 669-amino-acid chain: MEKCSVGGLELTEQTPALLGNMAMATSLMDIGDSFGHPACPLVSRSRNSPVEDDDDDDDVVFIESIQPPSISAPAIADQRNFIFASSKNEKPQGNYSVIPPSSRDLASQKGNISETIVIDDEEDIETNGGAEKKSSCFIEWGLPGTKNKTNDLDFSTSSLSRSKTKTGVRPFNPGRMNVAGDLFQNGEFATHHSPDSWISQSASFPSNQKQPGVDSLSPVALLRKQNFQPTAQQQLTKPAKITCANCKKPLQKGQTAYQRKGSAHLFCSTTCLSSFSHKRTQNTRSIICKKDASTKKANVILPVESSKSFQEFYSTSCLSPCENNWNLKKGVFNKSRCTICSKLAEIRHEVSVNNVTHKLCSNHCFNKYRLANGLIMNCCEHCGEYMPSKSTGNNILVIGGQQKRFCCQSCINEYKQMMETKSKKLTASENRKRNAFREENEKQLYGSSNTLLKKIEGIPEKKEKTSQLQLSVECGTDTLLIQENVNLPPSSTSTIADTFQEQLEEKNFEDSIVPVVLSADPGTWPRILNIKQRDTLVENVPPQVRNFNFPKDNTGRKFSETYYTRILPNGEKTTRSWLLYSTSKDSVFCLYCKLFGEGKNQLKNENGCKDWQHLSHILSKHEESEMHVNNSVKYSKLKSDLKKNKAIDAAEHRLYENEKNDGVLLLYT.

Glycyl lysine isopeptide (Lys-Gly) (interchain with G-Cter in SUMO2) cross-links involve residues Lys88, Lys91, Lys134, Lys149, Lys166, and Lys225. 4 consecutive MYM-type zinc fingers follow at residues 265 to 299, 311 to 351, 358 to 393, and 404 to 431; these read HLFC…KKAN, QEFY…RHEV, HKLC…KSTG, and KRFC…ASEN. Glycyl lysine isopeptide (Lys-Gly) (interchain with G-Cter in SUMO2) cross-links involve residues Lys443, Lys455, Lys462, and Lys552.

Interacts (via N-terminal 120 amino acid region) with ETV5 (via C-terminal).

The protein resides in the nucleus. Functions as a transcriptional regulator. In Homo sapiens (Human), this protein is Zinc finger MYM-type protein 5 (ZMYM5).